A 601-amino-acid polypeptide reads, in one-letter code: Deuterosome assembly protein 1 (601 aa).

Coiled-coil stretches lie at residues 14 to 59 (CEAE…NAQT), 86 to 197 (TQNY…KQQR), and 226 to 278 (IEKL…LQSR). Disordered stretches follow at residues 115 to 135 (MKQNQSHRKEASNKDETPFEL) and 188 to 213 (QTQLNGKQQRPEDSSPETPRLVCESS). Over residues 121–131 (HRKEASNKDET) the composition is skewed to basic and acidic residues. Residues 307 to 326 (DNRKRVESSYSPSTKEPERK) form a disordered region. Residues 340-397 (HEKELNKMRSQLYQEEDLCSEQERMRNEISELTQELHQKEVTIATIMKKAALLERQLK) adopt a coiled-coil conformation. Ser-544 is modified (phosphoserine). The stretch at 555-586 (AAQHFLMEEEKRAKELEKLLNTHIDELQRHTE) forms a coiled coil.

It belongs to the CEP63 family. In terms of assembly, interacts with CEP152; the interaction is mutually exclusive with CEP63.

It is found in the cytoplasm. Key structural component of the deuterosome, a structure that promotes de novo centriole amplification in multiciliated cells. Deuterosome-mediated centriole amplification occurs in terminally differentiated multiciliated cells and can generate more than 100 centrioles. Probably sufficient for the specification and formation of the deuterosome inner core. Interacts with CEP152 and recruits PLK4 to activate centriole biogenesis. This Rattus norvegicus (Rat) protein is Deuterosome assembly protein 1.